Reading from the N-terminus, the 1581-residue chain is Maestro heat-like repeat-containing protein family member 2B (1581 aa).

16 HEAT repeats span residues 123 to 160 (FMMMTLLTMQTMLRLVEDENMRQTFCIALENFSKSIYK), 305 to 342 (ANPVDLLDFFDEQIRSTNEAVRTGILTLLRSTINAEEP), 401 to 441 (MSNR…LVIG), 464 to 501 (DYLFNIIRILIMAEEKKKRDIQESTALVVSTGAVKLPS), 526 to 543 (AIGLLKIMPEIIHPKLAE), 544 to 580 (MWKTRMPALLQPLEGSNASIVLWETMLLQLLKESLWK), 658 to 695 (ENHLDIVLNVLKTFQDKEKFFVNRCKGIFSGKKSLTKT), 773 to 815 (TYKE…LKPA), 960 to 997 (CQEVDRLQGLQEGLDSEDEQVQIKISSKIAKIVCKFIP), 1017 to 1055 (PLCTKACGIWMIAALKEHGALLEDQLLEILSTIYHHMPV), 1112 to 1150 (KLMRALIKKLVARLEDDIAGTEAISVACAIYEVILTGAH), 1153 to 1191 (HLYPELFTLLLKLVSCSLGQKMPMSTLSQRRRVMQLGER), 1254 to 1291 (GVILDIMEHLLSSLTSSSENYRITGMAFFSELMKEPIL), 1295 to 1332 (GNLRDVLIFMDQNARDSNAILRQMAIRGLGNTACGAPH), 1359 to 1379 (CESLKALKKILELLTERDINF), and 1380 to 1416 (YFKEIVLQTRTFFEDEQDDVRLTAISLFEDLATLTGR).

As to quaternary structure, found in a complex at least composed of MROH2B isoform 2, PRKACA isoform 2 and TCP11. Interacts with PRKACA isoform 2. Interacts with TCP11. Post-translationally, constitutively phosphorylated on serine and threonine residues in acrosomal region of the sperm head, midpiece and flagellar regions of noncapacitated spermatozoa. Phosphorylation on tyrosine residues increases upon sperm capacitation within the acrosomal and tail regions in a protein kinase A (PKA)-dependent signaling pathway. In terms of tissue distribution, expressed strongly in round spermatids and fully mature spermatozoa. Expressed weakly in pachytene spermatocytes (at protein level). Isoform 2 is specifically expressed in the testis. Isoform 2 is expressed in pachytene spermatocytes and round spermatids. Isoform 3 is weakly expressed in testis.

It is found in the cytoplasm. Its subcellular location is the cytoplasmic vesicle. The protein resides in the secretory vesicle. It localises to the acrosome. The protein localises to the cell projection. It is found in the cilium. Its subcellular location is the flagellum. Functionally, may play a role in the process of sperm capacitation. The sequence is that of Maestro heat-like repeat-containing protein family member 2B from Mus musculus (Mouse).